The following is a 131-amino-acid chain: Small ribosomal subunit protein eS17 (131 aa).

This sequence belongs to the eukaryotic ribosomal protein eS17 family.

This Theileria annulata protein is Small ribosomal subunit protein eS17 (RPS17).